We begin with the raw amino-acid sequence, 274 residues long: Phloretin hydrolase (274 aa).

Residues His-123, Glu-154, His-251, and Glu-255 each contribute to the Zn(2+) site.

The protein belongs to the DAPG/phloretin hydrolase family. In terms of assembly, homodimer. It depends on Zn(2+) as a cofactor.

It localises to the cytoplasm. The enzyme catalyses phloretin + H2O = phloretate + 1,3,5-trihydroxybenzene + H(+). In terms of biological role, catalyzes the hydrolytic C-C cleavage of phloretin to phloroglucinol and 3-(4-hydroxyphenyl)propionic acid during flavonoid degradation. Also hydrolyzes other C-acylated phenols. In Eubacterium ramulus, this protein is Phloretin hydrolase (phy).